The following is a 722-amino-acid chain: Protein HAPLESS 2-A (722 aa).

The signal sequence occupies residues 1–24 (MPRRRGTPLPTILLLLAFVGGACG). Topologically, residues 25 to 552 (TEILSKSRLE…LFDFGCHIQY (528 aa)) are extracellular. 7 disulfides stabilise this stretch: C36/C48, C129/C159, C141/C188, C160/C315, C162/C171, C298/C322, and C435/C473. Residues 553–573 (VCIGWILLLLLIPAAVVFLWL) traverse the membrane as a helical segment. Over 574–722 (LHQEGLFDPL…HRDGHYSPSV (149 aa)) the chain is Cytoplasmic. A compositionally biased stretch (basic residues) spans 598 to 641 (RRRHQKGRHHRHHHDHRHRHGHSHGDHHHHYHGGHHQRRRHHHP). Disordered regions lie at residues 598–665 (RRRH…RNHH) and 680–722 (RLDR…SPSV). The span at 646–662 (VEGHHHDRQQHSHEAGR) shows a compositional bias: basic and acidic residues. Residues 701-711 (RRSRHERHGGH) show a composition bias toward basic residues. The span at 712-722 (GHRDGHYSPSV) shows a compositional bias: basic and acidic residues.

It belongs to the HAP2/GCS1 family.

It localises to the endoplasmic reticulum membrane. The protein resides in the cell membrane. In terms of biological role, required for male fertility. Plays a role in pollen tube guidance and successful gamete attachment. Essential for the fusion of gametes during double fertilization, where one male gamete fuses with the egg to produce a zygote, and another male gamete fuses with the central cell to produce the endosperm. Mediates the fusion of cell membranes. Not required for pollen tube outgrowth. This is Protein HAPLESS 2-A (HAP2A) from Oryza sativa subsp. japonica (Rice).